Here is a 271-residue protein sequence, read N- to C-terminus: 5-deoxy-glucuronate isomerase (271 aa).

It belongs to the isomerase IolB family.

It catalyses the reaction 5-deoxy-D-glucuronate = 5-dehydro-2-deoxy-D-gluconate. Its pathway is polyol metabolism; myo-inositol degradation into acetyl-CoA; acetyl-CoA from myo-inositol: step 4/7. Its function is as follows. Involved in the isomerization of 5-deoxy-glucuronate (5DG) to 5-dehydro-2-deoxy-D-gluconate (DKG or 2-deoxy-5-keto-D-gluconate). The sequence is that of 5-deoxy-glucuronate isomerase from Lacticaseibacillus casei (Lactobacillus casei).